The sequence spans 784 residues: LPS-assembly protein LptD (784 aa).

The signal sequence occupies residues M1 to A24. Cystine bridges form between C31–C724 and C173–C725.

It belongs to the LptD family. As to quaternary structure, component of the lipopolysaccharide transport and assembly complex. Interacts with LptE and LptA. In terms of processing, contains two intramolecular disulfide bonds.

Its subcellular location is the cell outer membrane. Together with LptE, is involved in the assembly of lipopolysaccharide (LPS) at the surface of the outer membrane. The chain is LPS-assembly protein LptD from Shigella flexneri serotype 5b (strain 8401).